The primary structure comprises 277 residues: Carbonyl reductase [NADPH] 1 (277 aa).

At Ser2 the chain carries N-acetylserine. Ser2 carries the post-translational modification Phosphoserine. NADP(+) contacts are provided by residues 10–34 (VTGA…GDVV), 63–64 (DI), and Asn90. Glutathione is bound by residues 95 to 97 (FKV) and Gln106. Ser140 contacts substrate. 193 to 194 (AY) contributes to the glutathione binding site. Residue Tyr194 is the Proton acceptor of the active site. NADP(+) is bound by residues 194-198 (YGVTK) and 231-233 (VRT). Residue Lys239 is modified to N6-1-carboxyethyl lysine. The interval 258–277 (PPGAEGPHGQFVQDKKVEPW) is disordered.

It belongs to the short-chain dehydrogenases/reductases (SDR) family. In terms of assembly, monomer.

The protein resides in the cytoplasm. It carries out the reaction a secondary alcohol + NADP(+) = a ketone + NADPH + H(+). The catalysed reaction is prostaglandin F2alpha + NADP(+) = prostaglandin E2 + NADPH + H(+). It catalyses the reaction prostaglandin E1 + NADP(+) = 15-oxoprostaglandin E1 + NADPH + H(+). The enzyme catalyses menadione + NADPH + H(+) = menadiol + NADP(+). It carries out the reaction prostaglandin D2 + NADP(+) = 15-oxoprostaglandin D2 + NADPH + H(+). The catalysed reaction is prostaglandin E2 + NADP(+) = 15-oxoprostaglandin E2 + NADPH + H(+). It catalyses the reaction prostaglandin F2alpha + NADP(+) = 15-oxoprostaglandin F2alpha + NADPH + H(+). The enzyme catalyses daunorubicin + NADPH + H(+) = 13-dihydrodaunorubicin + NADP(+). It carries out the reaction S-nitrosoglutathione + NADPH + H(+) = S-(hydroxysulfenamide)glutathione + NADP(+). The catalysed reaction is a primary alcohol + NADP(+) = an aldehyde + NADPH + H(+). It catalyses the reaction cortisol + NADPH + H(+) = 20beta-dihydrocortisol + NADP(+). The enzyme catalyses corticosterone + NADPH + H(+) = 20beta-dihydrocorticosterone + NADP(+). Functionally, NADPH-dependent reductase with broad substrate specificity. Catalyzes the reduction of a wide variety of carbonyl compounds including quinones, prostaglandins, menadione, plus various xenobiotics. Catalyzes the reduction of the antitumor anthracyclines doxorubicin and daunorubicin to the cardiotoxic compounds doxorubicinol and daunorubicinol. Can convert prostaglandin E to prostaglandin F2-alpha. Can bind glutathione, which explains its higher affinity for glutathione-conjugated substrates. Catalyzes the reduction of S-nitrosoglutathione. In addition, participates in the glucocorticoid metabolism by catalyzing the NADPH-dependent cortisol/corticosterone into 20beta-dihydrocortisol (20b-DHF) or 20beta-corticosterone (20b-DHB), which are weak agonists of NR3C1 and NR3C2 in adipose tissue. The polypeptide is Carbonyl reductase [NADPH] 1 (Rattus norvegicus (Rat)).